The following is a 94-amino-acid chain: Acylphosphatase (94 aa).

The Acylphosphatase-like domain maps to 6–92 (RVHVWIRGRV…EGLPTFEIRP (87 aa)). Residues Arg-21 and Asn-39 contribute to the active site.

Belongs to the acylphosphatase family.

The enzyme catalyses an acyl phosphate + H2O = a carboxylate + phosphate + H(+). This chain is Acylphosphatase (acyP), found in Synechococcus sp. (strain JA-2-3B'a(2-13)) (Cyanobacteria bacterium Yellowstone B-Prime).